A 336-amino-acid polypeptide reads, in one-letter code: Glycerol-3-phosphate dehydrogenase [NAD(P)+] (336 aa).

NADPH contacts are provided by S14, W15, R35, R36, and K109. Sn-glycerol 3-phosphate is bound by residues K109 and G139. Residue A143 coordinates NADPH. Positions 194, 247, 257, 258, and 259 each coordinate sn-glycerol 3-phosphate. Catalysis depends on K194, which acts as the Proton acceptor. Residue R258 participates in NADPH binding. E284 contacts NADPH.

It belongs to the NAD-dependent glycerol-3-phosphate dehydrogenase family.

It is found in the cytoplasm. It catalyses the reaction sn-glycerol 3-phosphate + NAD(+) = dihydroxyacetone phosphate + NADH + H(+). The catalysed reaction is sn-glycerol 3-phosphate + NADP(+) = dihydroxyacetone phosphate + NADPH + H(+). Its pathway is membrane lipid metabolism; glycerophospholipid metabolism. In terms of biological role, catalyzes the reduction of the glycolytic intermediate dihydroxyacetone phosphate (DHAP) to sn-glycerol 3-phosphate (G3P), the key precursor for phospholipid synthesis. In Streptomyces avermitilis (strain ATCC 31267 / DSM 46492 / JCM 5070 / NBRC 14893 / NCIMB 12804 / NRRL 8165 / MA-4680), this protein is Glycerol-3-phosphate dehydrogenase [NAD(P)+].